We begin with the raw amino-acid sequence, 298 residues long: Mitochondrial glycine transporter (298 aa).

Solcar repeat units follow at residues 5 to 84 (TKTR…MRTA), 105 to 189 (LTTY…AKEV), and 211 to 295 (TSTL…LIKL). Transmembrane regions (helical) follow at residues 11–36 (LIGG…TRIQ), 59–85 (GTLP…RTAI), 111–136 (LISG…VRYE), 164–187 (GFGP…EKAK), 215–241 (VNST…KTRM), and 270–288 (GLSM…AWGI).

Belongs to the mitochondrial carrier (TC 2.A.29) family. SLC25A38 subfamily.

Its subcellular location is the mitochondrion inner membrane. It catalyses the reaction glycine(in) = glycine(out). Functionally, mitochondrial glycine transporter that imports glycine into the mitochondrial matrix. Plays an important role in providing glycine for the first enzymatic step in heme biosynthesis, the condensation of glycine with succinyl-CoA to produce 5-aminolevulinate (ALA) in the mitochondrial matrix. The sequence is that of Mitochondrial glycine transporter from Vanderwaltozyma polyspora (strain ATCC 22028 / DSM 70294 / BCRC 21397 / CBS 2163 / NBRC 10782 / NRRL Y-8283 / UCD 57-17) (Kluyveromyces polysporus).